A 250-amino-acid polypeptide reads, in one-letter code: 3-deoxy-manno-octulosonate cytidylyltransferase (250 aa).

The protein belongs to the KdsB family.

The protein localises to the cytoplasm. It catalyses the reaction 3-deoxy-alpha-D-manno-oct-2-ulosonate + CTP = CMP-3-deoxy-beta-D-manno-octulosonate + diphosphate. Its pathway is nucleotide-sugar biosynthesis; CMP-3-deoxy-D-manno-octulosonate biosynthesis; CMP-3-deoxy-D-manno-octulosonate from 3-deoxy-D-manno-octulosonate and CTP: step 1/1. It participates in bacterial outer membrane biogenesis; lipopolysaccharide biosynthesis. In terms of biological role, activates KDO (a required 8-carbon sugar) for incorporation into bacterial lipopolysaccharide in Gram-negative bacteria. This is 3-deoxy-manno-octulosonate cytidylyltransferase from Cytophaga hutchinsonii (strain ATCC 33406 / DSM 1761 / CIP 103989 / NBRC 15051 / NCIMB 9469 / D465).